A 345-amino-acid chain; its full sequence is Galacturonate transporter (345 aa).

A signal peptide spans 1–32; sequence MFKIKGLRWYMIGLVTIGTVLGYLTRNAIAAA. The next 8 helical transmembrane spans lie at 49-69, 76-96, 100-120, 139-159, 165-185, 237-257, 265-285, and 304-324; these read YIIA…GYVL, VGYA…ALAN, GLAV…PAGL, FNVG…WAIM, MAFL…LYFY, FLAE…MFKA, IAMF…LGGY, and LVVT…LFTS.

The protein belongs to the major facilitator superfamily. Phthalate permease family.

The protein resides in the cell inner membrane. It carries out the reaction aldehydo-D-galacturonate(out) + H(+)(out) = aldehydo-D-galacturonate(in) + H(+)(in). Its activity is regulated as follows. Inhibited by cyanide and 2,4-dinitrophenol, but not by arsenate. Transport of D-galacturonate. Cannot transport the dimer digalacturonic acid. Uptake is an active process. In Dickeya chrysanthemi (Pectobacterium chrysanthemi), this protein is Galacturonate transporter.